A 124-amino-acid chain; its full sequence is S-adenosylmethionine decarboxylase proenzyme (124 aa).

Ser63 functions as the Schiff-base intermediate with substrate; via pyruvic acid in the catalytic mechanism. Ser63 carries the pyruvic acid (Ser); by autocatalysis modification. His68 serves as the catalytic Proton acceptor; for processing activity. Cys83 functions as the Proton donor; for catalytic activity in the catalytic mechanism.

This sequence belongs to the prokaryotic AdoMetDC family. Type 1 subfamily. As to quaternary structure, heterotetramer of two alpha and two beta chains arranged as a dimer of alpha/beta heterodimers. The cofactor is pyruvate. Is synthesized initially as an inactive proenzyme. Formation of the active enzyme involves a self-maturation process in which the active site pyruvoyl group is generated from an internal serine residue via an autocatalytic post-translational modification. Two non-identical subunits are generated from the proenzyme in this reaction, and the pyruvate is formed at the N-terminus of the alpha chain, which is derived from the carboxyl end of the proenzyme. The post-translation cleavage follows an unusual pathway, termed non-hydrolytic serinolysis, in which the side chain hydroxyl group of the serine supplies its oxygen atom to form the C-terminus of the beta chain, while the remainder of the serine residue undergoes an oxidative deamination to produce ammonia and the pyruvoyl group blocking the N-terminus of the alpha chain.

It carries out the reaction S-adenosyl-L-methionine + H(+) = S-adenosyl 3-(methylsulfanyl)propylamine + CO2. Its pathway is amine and polyamine biosynthesis; S-adenosylmethioninamine biosynthesis; S-adenosylmethioninamine from S-adenosyl-L-methionine: step 1/1. In terms of biological role, catalyzes the decarboxylation of S-adenosylmethionine to S-adenosylmethioninamine (dcAdoMet), the propylamine donor required for the synthesis of the polyamines spermine and spermidine from the diamine putrescine. The polypeptide is S-adenosylmethionine decarboxylase proenzyme (Caldanaerobacter subterraneus subsp. tengcongensis (strain DSM 15242 / JCM 11007 / NBRC 100824 / MB4) (Thermoanaerobacter tengcongensis)).